We begin with the raw amino-acid sequence, 51 residues long: Insulin (51 aa).

Intrachain disulfides connect C7–C37, C19–C50, and C36–C41.

Belongs to the insulin family. As to quaternary structure, heterodimer of a B chain and an A chain linked by two disulfide bonds.

Its subcellular location is the secreted. Insulin decreases blood glucose concentration. It increases cell permeability to monosaccharides, amino acids and fatty acids. It accelerates glycolysis, the pentose phosphate cycle, and glycogen synthesis in liver. The sequence is that of Insulin (INS) from Hystrix cristata (North African crested porcupine).